A 195-amino-acid chain; its full sequence is Cysteine/O-acetylserine efflux protein (195 aa).

A run of 5 helical transmembrane segments spans residues 47-67 (SLGF…LAVI), 70-90 (AAVH…AWKI), 105-125 (ISFW…LYGV), 142-162 (VVGV…CWAL), and 177-194 (QLNI…VRIF).

The protein belongs to the Rht family.

It localises to the cell inner membrane. It carries out the reaction O-acetyl-L-serine(in) = O-acetyl-L-serine(out). The enzyme catalyses L-cysteine(in) = L-cysteine(out). Exporter of O-acetylserine (OAS) and cysteine. The polypeptide is Cysteine/O-acetylserine efflux protein (eamB) (Shigella boydii serotype 4 (strain Sb227)).